The chain runs to 148 residues: Large-conductance mechanosensitive channel (148 aa).

A run of 2 helical transmembrane segments spans residues 9-29 (AFAV…GAAF) and 79-99 (IQTV…VKAI).

This sequence belongs to the MscL family. Homopentamer.

The protein resides in the cell inner membrane. In terms of biological role, channel that opens in response to stretch forces in the membrane lipid bilayer. May participate in the regulation of osmotic pressure changes within the cell. In Pseudomonas syringae pv. syringae (strain B728a), this protein is Large-conductance mechanosensitive channel.